Here is a 130-residue protein sequence, read N- to C-terminus: Small ribosomal subunit protein uS8 (130 aa).

It belongs to the universal ribosomal protein uS8 family. As to quaternary structure, part of the 30S ribosomal subunit. Contacts proteins S5 and S12.

One of the primary rRNA binding proteins, it binds directly to 16S rRNA central domain where it helps coordinate assembly of the platform of the 30S subunit. The sequence is that of Small ribosomal subunit protein uS8 from Pseudomonas fluorescens (strain Pf0-1).